Here is a 174-residue protein sequence, read N- to C-terminus: Large ribosomal subunit protein bL12cz (174 aa).

Residues 1–45 constitute a chloroplast transit peptide; it reads MASTTFSSAFSILSLPSSSPSPPPSPPRTLPVANRRRRAAAVAST. The segment at 1-46 is disordered; the sequence is MASTTFSSAFSILSLPSSSPSPPPSPPRTLPVANRRRRAAAVASTA. Low complexity predominate over residues 7 to 18; that stretch reads SSAFSILSLPSS. The segment covering 19 to 29 has biased composition (pro residues); it reads SPSPPPSPPRT.

The protein belongs to the bacterial ribosomal protein bL12 family.

It localises to the plastid. Its subcellular location is the chloroplast. The sequence is that of Large ribosomal subunit protein bL12cz (RPL12-1) from Secale cereale (Rye).